A 213-amino-acid polypeptide reads, in one-letter code: Holliday junction resolvase RecU (213 aa).

Mg(2+)-binding residues include threonine 99, aspartate 101, glutamate 114, and glutamine 133.

The protein belongs to the RecU family. It depends on Mg(2+) as a cofactor.

It localises to the cytoplasm. The catalysed reaction is Endonucleolytic cleavage at a junction such as a reciprocal single-stranded crossover between two homologous DNA duplexes (Holliday junction).. Functionally, endonuclease that resolves Holliday junction intermediates in genetic recombination. Cleaves mobile four-strand junctions by introducing symmetrical nicks in paired strands. Promotes annealing of linear ssDNA with homologous dsDNA. Required for DNA repair, homologous recombination and chromosome segregation. This is Holliday junction resolvase RecU from Lactococcus lactis subsp. cremoris (strain SK11).